The primary structure comprises 555 residues: Potassium-transporting ATPase potassium-binding subunit (555 aa).

The next 10 membrane-spanning stretches (helical) occupy residues 2–22 (IWVA…PTGV), 60–80 (QYAL…YFIF), 130–150 (IGIT…VMAF), 173–193 (VFLP…VPQT), 246–266 (MSNI…PFTY), 278–298 (ILFV…TTSE), 374–394 (AGFV…GLMV), 412–432 (LIAV…ALAL), 483–503 (LVMF…AASL), and 525–545 (GIFI…MLVL).

This sequence belongs to the KdpA family. As to quaternary structure, the system is composed of three essential subunits: KdpA, KdpB and KdpC.

The protein localises to the cell membrane. Functionally, part of the high-affinity ATP-driven potassium transport (or Kdp) system, which catalyzes the hydrolysis of ATP coupled with the electrogenic transport of potassium into the cytoplasm. This subunit binds the extracellular potassium ions and delivers the ions to the membrane domain of KdpB through an intramembrane tunnel. The protein is Potassium-transporting ATPase potassium-binding subunit of Bacillus cereus (strain B4264).